Here is a 185-residue protein sequence, read N- to C-terminus: UPF0669 protein C6orf120 homolog (185 aa).

An N-terminal signal peptide occupies residues 1–23 (MATPWRCALLMILASQVVILVKC). Asparagine 47 carries N-linked (GlcNAc...) asparagine glycosylation.

This sequence belongs to the UPF0669 family.

Its subcellular location is the secreted. In terms of biological role, may be involved in induction of apoptosis in CD4(+) T-cells, but not CD8(+) T-cells or hepatocytes. This Rattus norvegicus (Rat) protein is UPF0669 protein C6orf120 homolog.